A 209-amino-acid polypeptide reads, in one-letter code: Uridine kinase (209 aa).

12 to 19 (GGSGSGKT) provides a ligand contact to ATP.

It belongs to the uridine kinase family.

It is found in the cytoplasm. It carries out the reaction uridine + ATP = UMP + ADP + H(+). The catalysed reaction is cytidine + ATP = CMP + ADP + H(+). Its pathway is pyrimidine metabolism; CTP biosynthesis via salvage pathway; CTP from cytidine: step 1/3. The protein operates within pyrimidine metabolism; UMP biosynthesis via salvage pathway; UMP from uridine: step 1/1. This chain is Uridine kinase, found in Listeria monocytogenes serotype 4b (strain CLIP80459).